A 461-amino-acid chain; its full sequence is MKNTSSSTTLTMNDTIAAIATPLGKGAISIIKISGHNALNILKQLTQKQDFTPRYAYVCDIFSDGVLLDKALVIYFKAPYSFTGEDVCEIQCHGSPLLAQNILQACLNLGARLAKAGEFSKKAFLNHKMDLSEIEASVQLILCEDESVLNALARQLKGELKIFIEEARNNLLKLLASSEVLIDYSEEDIPSDFLKEVSFNLEKQIASFKDLLDFSNAQKQRNKGHALSIVGKPNAGKSSLLNAMLLEERALVSDIKGTTRDTIEEVIELKGHKVRLIDTAGIRESADEIERLGIEKSLKSLENCDIILGVFDLSKPLEKEDFNLMDTLNRTKKPCIVVLNKNDLAPKLELEILKSYLKIPYSILETNTLNSKACLKDLSQKISEFFPKLDTQNKLLLTSLAQTTALENAITELQNAKSHLDTLELFSYHILSAIENLNLLTRPYETSQMLDSMFSEFCLGK.

Residues Lys-32, Glu-89, and Lys-128 each coordinate (6S)-5-formyl-5,6,7,8-tetrahydrofolate. Residues 224 to 387 (GHALSIVGKP…LSQKISEFFP (164 aa)) form the TrmE-type G domain. Asn-234 is a K(+) binding site. GTP is bound by residues 234 to 239 (NAGKSS), 253 to 259 (SDIKGTT), and 278 to 281 (DTAG). Ser-238 serves as a coordination point for Mg(2+). Residues Ser-253, Ile-255, and Thr-258 each coordinate K(+). Thr-259 provides a ligand contact to Mg(2+). Lys-461 contributes to the (6S)-5-formyl-5,6,7,8-tetrahydrofolate binding site.

Belongs to the TRAFAC class TrmE-Era-EngA-EngB-Septin-like GTPase superfamily. TrmE GTPase family. As to quaternary structure, homodimer. Heterotetramer of two MnmE and two MnmG subunits. K(+) is required as a cofactor.

It localises to the cytoplasm. Exhibits a very high intrinsic GTPase hydrolysis rate. Involved in the addition of a carboxymethylaminomethyl (cmnm) group at the wobble position (U34) of certain tRNAs, forming tRNA-cmnm(5)s(2)U34. In Helicobacter pylori (strain J99 / ATCC 700824) (Campylobacter pylori J99), this protein is tRNA modification GTPase MnmE.